We begin with the raw amino-acid sequence, 305 residues long: UDP-3-O-acyl-N-acetylglucosamine deacetylase (305 aa).

Zn(2+)-binding residues include His-79, His-238, and Asp-242. The Proton donor role is filled by His-265.

The protein belongs to the LpxC family. Zn(2+) serves as cofactor.

The enzyme catalyses a UDP-3-O-[(3R)-3-hydroxyacyl]-N-acetyl-alpha-D-glucosamine + H2O = a UDP-3-O-[(3R)-3-hydroxyacyl]-alpha-D-glucosamine + acetate. It participates in glycolipid biosynthesis; lipid IV(A) biosynthesis; lipid IV(A) from (3R)-3-hydroxytetradecanoyl-[acyl-carrier-protein] and UDP-N-acetyl-alpha-D-glucosamine: step 2/6. Functionally, catalyzes the hydrolysis of UDP-3-O-myristoyl-N-acetylglucosamine to form UDP-3-O-myristoylglucosamine and acetate, the committed step in lipid A biosynthesis. This Actinobacillus succinogenes (strain ATCC 55618 / DSM 22257 / CCUG 43843 / 130Z) protein is UDP-3-O-acyl-N-acetylglucosamine deacetylase.